A 182-amino-acid chain; its full sequence is MMQICDTYNQKHSLFNAMNRFIGAVNNMDQTVMVPSLLRDVPLSEPEIDEVSVEVGGSGGCLEERTTPAPSPGSANESFFAPSRDMYSHYVLLKSIRNDIEWGVLHQPSSPPAGSEESTWKPKDILVGLSHLESADAGEEDLEQQFHYHLRGLHTVLSKLTRKANILTNRYKQEIGFSNWGH.

At M1 the chain carries N-acetylmethionine. The interval 55-75 (VGGSGGCLEERTTPAPSPGSA) is disordered. 3 positions are modified to phosphoserine: S71, S74, and S78.

This sequence belongs to the SPOT14 family. As to quaternary structure, homodimer in the absence of THRSP. Heterodimer with THRSP. The homodimer interacts with ACACA and ACACB. Promotes polymerization of Acetyl-CoA carboxylase to form complexes that contain MID1IP1 and ACACA and/or ACACB. Interaction with THRSP interferes with ACACA binding. In terms of tissue distribution, during embryonic development, expressed mainly in the neuroepithelial midline, urogenital apparatus and digits. Detected in adult white fat, liver, heart, brain and kidney. Expressed at very low levels in lactating mammary gland.

The protein localises to the nucleus. It is found in the cytoplasm. The protein resides in the cytoskeleton. In terms of biological role, plays a role in the regulation of lipogenesis in liver. Up-regulates ACACA enzyme activity. Required for efficient lipid biosynthesis, including triacylglycerol, diacylglycerol and phospholipid. Involved in stabilization of microtubules. This is Mid1-interacting protein 1 (Mid1ip1) from Mus musculus (Mouse).